The sequence spans 483 residues: MGKALMVLGTSSGAGKSLLVTALCRIFSNLGYDVVPFKSQNMSLNSAPSIEGGEISRAQYLQAIACRKKPSVRFNPILLKPEGNMRSQVIFMGKPIGSVSAKDYMLSRKEELFRKAMKVLDELKERHDLVIIEGAGSPVEINLKDYDIANTRVMLHAKAKGILVTDIDRGGSFASIVGTMELLKPEERDTIIGFVFNKFRGDKSLLEPGFEYLEKRYGKPTLGVIPYVEHRLPEEDSLAEFPKVKGELHIQIIKLPHISNFTDFEPLHWANGVDYVTRPEELKGDVIIIPGSKNTVEDLLWLRENGFEDAIIEAHREGSFVVGICGGFQMLGEKIIDTVESKRGEVKGIGLLPAKTVFEKTKRTNHLNAEVLWEPARGMAVEGYEIRFGRSVSERPFSVIKAINGAKTFEPEGAIGERAFGTYLHGIFHNFAFTERFLNFLRVEKGLEPVSIERWSIEEEIERFAKLVEENIDVERILGELGL.

Positions Glu247–Phe433 constitute a GATase cobBQ-type domain. Cys325 acts as the Nucleophile in catalysis. His425 is an active-site residue.

This sequence belongs to the CobB/CobQ family. CobQ subfamily.

It participates in cofactor biosynthesis; adenosylcobalamin biosynthesis. Its function is as follows. Catalyzes amidations at positions B, D, E, and G on adenosylcobyrinic A,C-diamide. NH(2) groups are provided by glutamine, and one molecule of ATP is hydrogenolyzed for each amidation. The chain is Probable cobyric acid synthase from Thermococcus gammatolerans (strain DSM 15229 / JCM 11827 / EJ3).